A 51-amino-acid chain; its full sequence is MREKIRLVSSAKTGHFYTTTKNKREMPNKMEIKKFDPVVRKHVMYKEAKIK.

This sequence belongs to the bacterial ribosomal protein bL33 family.

This Francisella philomiragia subsp. philomiragia (strain ATCC 25017 / CCUG 19701 / FSC 153 / O#319-036) protein is Large ribosomal subunit protein bL33.